The following is a 101-amino-acid chain: ATP-dependent Clp protease adapter protein ClpS 1 (101 aa).

Belongs to the ClpS family. As to quaternary structure, binds to the N-terminal domain of the chaperone ClpA.

Its function is as follows. Involved in the modulation of the specificity of the ClpAP-mediated ATP-dependent protein degradation. This Bradyrhizobium diazoefficiens (strain JCM 10833 / BCRC 13528 / IAM 13628 / NBRC 14792 / USDA 110) protein is ATP-dependent Clp protease adapter protein ClpS 1.